Here is a 183-residue protein sequence, read N- to C-terminus: ATP-dependent protease subunit HslV (183 aa).

The active site involves threonine 13. Positions 168, 171, and 174 each coordinate Na(+).

The protein belongs to the peptidase T1B family. HslV subfamily. In terms of assembly, a double ring-shaped homohexamer of HslV is capped on each side by a ring-shaped HslU homohexamer. The assembly of the HslU/HslV complex is dependent on binding of ATP.

The protein resides in the cytoplasm. The catalysed reaction is ATP-dependent cleavage of peptide bonds with broad specificity.. Allosterically activated by HslU binding. Its function is as follows. Protease subunit of a proteasome-like degradation complex believed to be a general protein degrading machinery. The sequence is that of ATP-dependent protease subunit HslV from Xanthomonas campestris pv. campestris (strain ATCC 33913 / DSM 3586 / NCPPB 528 / LMG 568 / P 25).